Reading from the N-terminus, the 254-residue chain is Cobalt transport protein CbiM (254 aa).

The signal sequence occupies residues 1–31 (MKTILRPFTLLSRSIFLALFVLFLWSPDAHA). The next 6 helical transmembrane spans lie at 37–57 (GFLP…FLVV), 74–94 (LLLA…IPSV), 106–126 (LGAV…VLLF), 128–148 (ALLL…SMAI), 169–189 (WLAV…VTSL), and 212–232 (IFAL…VMVF).

It belongs to the CbiM family. As to quaternary structure, forms an energy-coupling factor (ECF) transporter complex composed of an ATP-binding protein (A component, CbiO), a transmembrane protein (T component, CbiQ) and 2 possible substrate-capture proteins (S components, CbiM and CbiN) of unknown stoichimetry.

Its subcellular location is the cell inner membrane. It functions in the pathway cofactor biosynthesis; adenosylcobalamin biosynthesis. Part of the energy-coupling factor (ECF) transporter complex CbiMNOQ involved in cobalt import. The protein is Cobalt transport protein CbiM of Chlorobium limicola (strain DSM 245 / NBRC 103803 / 6330).